Here is a 753-residue protein sequence, read N- to C-terminus: Nibrin (753 aa).

One can recognise an FHA domain in the interval Tyr-22–Leu-81. BRCT domains follow at residues Ser-101–Glu-191 and Gly-221–Ile-311. Ser-274 carries the post-translational modification Phosphoserine. Ser-343 carries the post-translational modification Phosphoserine; by ATM. A disordered region spans residues Arg-442–Met-606. Positions Pro-446–Asn-455 are enriched in polar residues. Residues Arg-461–Glu-467 carry the Nuclear localization signal motif. The segment covering Cys-490–Asn-500 has biased composition (polar residues). Residues Glu-517–Ile-528 are compositionally biased toward basic and acidic residues. The span at Gln-568–Gln-577 shows a compositional bias: polar residues. The span at Cys-585–Met-606 shows a compositional bias: basic and acidic residues. Positions Ala-739–Asn-748 match the FxF/Y motif motif.

The protein belongs to the Nibrin family. As to quaternary structure, component of the MRN complex composed of two heterodimers RAD50 and mre11 associated with a single NBN.

It localises to the nucleus. It is found in the chromosome. The protein localises to the PML body. Its subcellular location is the telomere. Component of the MRN complex, which plays a central role in double-strand break (DSB) repair, DNA recombination, maintenance of telomere integrity and meiosis. The MRN complex is involved in the repair of DNA double-strand breaks (DSBs) via homologous recombination (HR), an error-free mechanism which primarily occurs during S and G2 phases. The complex (1) mediates the end resection of damaged DNA, which generates proper single-stranded DNA, a key initial steps in HR, and is (2) required for the recruitment of other repair factors and efficient activation of ATM and ATR upon DNA damage. The MRN complex possesses single-strand endonuclease activity and double-strand-specific 3'-5' exonuclease activity, which are provided by MRE11, to initiate end resection, which is required for single-strand invasion and recombination. Within the MRN complex, NBN acts as a protein-protein adapter, which specifically recognizes and binds phosphorylated proteins, promoting their recruitment to DNA damage sites. Recruits MRE11 and RAD50 components of the MRN complex to DSBs in response to DNA damage. Promotes the recruitment of PI3/PI4-kinase family members ATM, ATR, and probably DNA-PKcs to the DNA damage sites, activating their functions. Mediates the recruitment of phosphorylated RBBP8/CtIP to DSBs, leading to cooperation between the MRN complex and RBBP8/CtIP to initiate end resection. The MRN complex and rbbp8/CtIP are also required for chromosome alignment during metaphase. This chain is Nibrin (NBN), found in Gallus gallus (Chicken).